The chain runs to 376 residues: Dihydroorotate dehydrogenase (quinone) (376 aa).

Residues 74–78 (AGFDK) and Thr-98 contribute to the FMN site. Lys-78 provides a ligand contact to substrate. 123-127 (NRMGF) is a substrate binding site. The FMN site is built by Asn-155 and Asn-188. Substrate is bound at residue Asn-188. The active-site Nucleophile is Ser-191. Asn-193 is a substrate binding site. FMN-binding residues include Lys-226 and Thr-254. 255–256 (NT) is a substrate binding site. FMN is bound by residues Gly-284, Gly-313, and 334 to 335 (YT).

Belongs to the dihydroorotate dehydrogenase family. Type 2 subfamily. Monomer. Requires FMN as cofactor.

The protein localises to the cell membrane. It catalyses the reaction (S)-dihydroorotate + a quinone = orotate + a quinol. It participates in pyrimidine metabolism; UMP biosynthesis via de novo pathway; orotate from (S)-dihydroorotate (quinone route): step 1/1. Catalyzes the conversion of dihydroorotate to orotate with quinone as electron acceptor. The polypeptide is Dihydroorotate dehydrogenase (quinone) (Nostoc punctiforme (strain ATCC 29133 / PCC 73102)).